The following is an 84-amino-acid chain: Small ribosomal subunit protein bS20 (84 aa).

The segment at 1–25 (MANIVSNEKTYRHTQKVRKENHAKM) is disordered.

Belongs to the bacterial ribosomal protein bS20 family.

Its function is as follows. Binds directly to 16S ribosomal RNA. This chain is Small ribosomal subunit protein bS20, found in Ureaplasma urealyticum serovar 10 (strain ATCC 33699 / Western).